The sequence spans 187 residues: Probable nicotinate-nucleotide adenylyltransferase (187 aa).

It belongs to the NadD family.

The catalysed reaction is nicotinate beta-D-ribonucleotide + ATP + H(+) = deamido-NAD(+) + diphosphate. It participates in cofactor biosynthesis; NAD(+) biosynthesis; deamido-NAD(+) from nicotinate D-ribonucleotide: step 1/1. Its function is as follows. Catalyzes the reversible adenylation of nicotinate mononucleotide (NaMN) to nicotinic acid adenine dinucleotide (NaAD). The protein is Probable nicotinate-nucleotide adenylyltransferase of Anaeromyxobacter dehalogenans (strain 2CP-1 / ATCC BAA-258).